The chain runs to 161 residues: Cell division protein SepF (161 aa).

Belongs to the SepF family. As to quaternary structure, homodimer. Interacts with FtsZ.

It is found in the cytoplasm. In terms of biological role, cell division protein that is part of the divisome complex and is recruited early to the Z-ring. Probably stimulates Z-ring formation, perhaps through the cross-linking of FtsZ protofilaments. Its function overlaps with FtsA. This is Cell division protein SepF from Finegoldia magna (strain ATCC 29328 / DSM 20472 / WAL 2508) (Peptostreptococcus magnus).